The following is a 239-amino-acid chain: MSKPDLDAFLHGDDAALRETNRRLESMPAEDRVRWALEHLPPQHVLSSSFGTQSAVMLHLVSRQMPEIPVILVDTGYLFPETYRLVDALTDRFGLNLKVYRPALSPAWQEAGLGRLWEQGADGIERYNRLNKIDPMERALRDLDAGTWFAGLRRQQANSRAELPVLRRQDGRIKFHPIIDWHRPRRARYLRRHDLPDHPLRDQGYVSIGDVHTTVPLLPGMLEEETRFFGIKRECGLHR.

C235 acts as the Nucleophile; cysteine thiosulfonate intermediate in catalysis.

The protein belongs to the PAPS reductase family. CysH subfamily.

Its subcellular location is the cytoplasm. It carries out the reaction [thioredoxin]-disulfide + sulfite + adenosine 3',5'-bisphosphate + 2 H(+) = [thioredoxin]-dithiol + 3'-phosphoadenylyl sulfate. Its pathway is sulfur metabolism; hydrogen sulfide biosynthesis; sulfite from sulfate: step 3/3. Its function is as follows. Catalyzes the formation of sulfite from phosphoadenosine 5'-phosphosulfate (PAPS) using thioredoxin as an electron donor. The protein is Phosphoadenosine 5'-phosphosulfate reductase of Thiocapsa roseopersicina.